A 366-amino-acid chain; its full sequence is 3-dehydroquinate synthase (366 aa).

Residues 71–76, 105–109, 129–130, lysine 142, lysine 151, and 169–172 each bind NAD(+); these read DGEQYK, GVIGD, TT, and CLKT. Residues glutamate 184, histidine 247, and histidine 264 each contribute to the Zn(2+) site.

This sequence belongs to the sugar phosphate cyclases superfamily. Dehydroquinate synthase family. It depends on Co(2+) as a cofactor. Zn(2+) serves as cofactor. Requires NAD(+) as cofactor.

It localises to the cytoplasm. The enzyme catalyses 7-phospho-2-dehydro-3-deoxy-D-arabino-heptonate = 3-dehydroquinate + phosphate. It functions in the pathway metabolic intermediate biosynthesis; chorismate biosynthesis; chorismate from D-erythrose 4-phosphate and phosphoenolpyruvate: step 2/7. In terms of biological role, catalyzes the conversion of 3-deoxy-D-arabino-heptulosonate 7-phosphate (DAHP) to dehydroquinate (DHQ). In Serratia proteamaculans (strain 568), this protein is 3-dehydroquinate synthase.